The chain runs to 415 residues: Alpha-2Db adrenergic receptor (415 aa).

Topologically, residues 1 to 33 (MDLSTITFLLPNSSEDTNGTSAPRLPPHSQCAS) are extracellular. Residues N12 and N18 are each glycosylated (N-linked (GlcNAc...) asparagine). The helical transmembrane segment at 34-58 (VLIVLVVTVIILVTIVGNVLVVVAV) threads the bilayer. The Cytoplasmic segment spans residues 59–70 (FTSRALRAPQNL). Residues 71-96 (FLVSLAAADILVATLVIPFSLANEVM) form a helical membrane-spanning segment. Over 97-106 (GYWYLGSTWC) the chain is Extracellular. A disulfide bridge connects residues C106 and C179. Residues 107–129 (AFYLALDVLFCTSSIVHLCAISL) traverse the membrane as a helical segment. At 130-150 (DRYWSVTKAVSYNLKRTPRRI) the chain is on the cytoplasmic side. The helical transmembrane segment at 151–173 (KIMITVVWVISAVISFPPLLMTK) threads the bilayer. Residues 174-184 (HDELECLLNNE) are Extracellular-facing. An N-linked (GlcNAc...) asparagine glycan is attached at N183. Residues 185–208 (TWYILSSCIVSFFAPGLIMILVYC) traverse the membrane as a helical segment. The Cytoplasmic portion of the chain corresponds to 209–339 (RIYRVAKQRA…QMREKRFTFV (131 aa)). The disordered stretch occupies residues 234-299 (QSETCFVRKG…EGAQSCPKPN (66 aa)). Positions 276–286 (NRHRNSRFAKS) are enriched in basic residues. A helical transmembrane segment spans residues 340–363 (LAVVMGVFVLCWFPFFFTYSLHAI). Residues 364–376 (CRKSCTIPDSLFN) lie on the Extracellular side of the membrane. Residues 377–397 (LFFWIGYCNSSVNPIIYTIFN) traverse the membrane as a helical segment. Over 398–415 (RDFRKAFKKIMCRHSTRT) the chain is Cytoplasmic.

This sequence belongs to the G-protein coupled receptor 1 family. Adrenergic receptor subfamily. ADRA2D sub-subfamily.

The protein localises to the cell membrane. Its function is as follows. Alpha-2 adrenergic receptors mediate the catecholamine-induced inhibition of adenylate cyclase through the action of G proteins. The order of potency for this receptor is dexmedetomidine &gt; norepinephrine = epinephrine &gt; oxymetazoline. This Danio rerio (Zebrafish) protein is Alpha-2Db adrenergic receptor (adra2db).